A 244-amino-acid chain; its full sequence is Orotidine 5'-phosphate decarboxylase (244 aa).

Residues Asp-12, Lys-34, Asp-61–Thr-70, Thr-125, Arg-187, Gln-196, Gly-216, and Arg-217 each bind substrate. The Proton donor role is filled by Lys-63.

The protein belongs to the OMP decarboxylase family. Type 1 subfamily. As to quaternary structure, homodimer.

The enzyme catalyses orotidine 5'-phosphate + H(+) = UMP + CO2. It functions in the pathway pyrimidine metabolism; UMP biosynthesis via de novo pathway; UMP from orotate: step 2/2. In terms of biological role, catalyzes the decarboxylation of orotidine 5'-monophosphate (OMP) to uridine 5'-monophosphate (UMP). This Dictyoglomus turgidum (strain DSM 6724 / Z-1310) protein is Orotidine 5'-phosphate decarboxylase.